A 369-amino-acid chain; its full sequence is Superinfection exclusion protein (369 aa).

Residues 1-15 form the signal peptide; sequence MIALLILSLTCSVST.

This sequence belongs to the serpin family. Orthopoxvirus OPG040 subfamily. As to quaternary structure, interacts with OPG185/A56 protein.

The protein resides in the virion membrane. The protein localises to the host cell membrane. Functionally, negatively regulates superinfection and syncytium formation in infected host cells. Acts in concert with OPG185/A56 protein at the host cell membrane by interacting with and inhibiting the mature virion entry/fusion complex (EFC). This mechanism ensures that new virions released from the cell cannot enter already infected cells. The chain is Superinfection exclusion protein (OPG040) from Vaccinia virus (strain Western Reserve) (VACV).